A 176-amino-acid polypeptide reads, in one-letter code: Interleukin-20 (176 aa).

Positions 1–24 (MKGFGLAFGLFSAVGFLLWTPLTG) are cleaved as a signal peptide. Disulfide bonds link Cys33–Cys126, Cys80–Cys132, and Cys81–Cys134.

This sequence belongs to the IL-10 family. Forms a 1:1:1 heterotrimeric complex with its primary high-affinity heterodimeric receptor IL20RA/IL20RB.

It is found in the secreted. Functionally, pro-inflammatory and angiogenic cytokine mainly secreted by monocytes and skin keratinocytes that plays crucial roles in immune responses, regulation of inflammatory responses, hemopoiesis, as well as epidermal cell and keratinocyte differentiation. Enhances tissue remodeling and wound-healing activities and restores the homeostasis of epithelial layers during infection and inflammatory responses to maintain tissue integrity. Affects multiple actin-mediated functions in activated neutrophils leading to inhibition of phagocytosis, granule exocytosis, and migration. Exert its effects via the type I IL-20 receptor complex consisting of IL20RA and IL20RB. Alternatively, can mediate its activity through a second receptor complex called type II IL-20 receptor complex composed of IL22RA1 and IL20RB. Acts as an arteriogenic and vascular remodeling factory by activating a range of signaling processes including phosphorylations of JAK2 and STAT5 as well as activation of the serine and threonine kinases AKT and ERK1/2. Alternatively, can activate STAT3 phosphorylation and transcriptional activity in a JAK2, ERK1/2 and p38 MAPK-dependent manner in keratinocytes. This chain is Interleukin-20 (Il20), found in Mus musculus (Mouse).